Consider the following 238-residue polypeptide: Peptidyl-tRNA hydrolase (238 aa).

Tyrosine 14 contributes to the tRNA binding site. Histidine 19 (proton acceptor) is an active-site residue. Positions 64, 66, and 112 each coordinate tRNA. Residues 202 to 225 (PAAQSHIHQARNSAQPKKLPETGP) form a disordered region. Positions 207-216 (HIHQARNSAQ) are enriched in polar residues.

This sequence belongs to the PTH family. Monomer.

The protein localises to the cytoplasm. The catalysed reaction is an N-acyl-L-alpha-aminoacyl-tRNA + H2O = an N-acyl-L-amino acid + a tRNA + H(+). Its function is as follows. Hydrolyzes ribosome-free peptidyl-tRNAs (with 1 or more amino acids incorporated), which drop off the ribosome during protein synthesis, or as a result of ribosome stalling. Catalyzes the release of premature peptidyl moieties from peptidyl-tRNA molecules trapped in stalled 50S ribosomal subunits, and thus maintains levels of free tRNAs and 50S ribosomes. This chain is Peptidyl-tRNA hydrolase, found in Agrobacterium fabrum (strain C58 / ATCC 33970) (Agrobacterium tumefaciens (strain C58)).